We begin with the raw amino-acid sequence, 969 residues long: Activity-dependent neuroprotective protein a (969 aa).

Residues 74-97 form a C2H2-type 1 zinc finger; sequence FCCSDCPFASKYFSAYKNHFRNVH. The C2H2-type 2; atypical zinc finger occupies 107–129; it reads LNCSYCTYSGNKRTLETHVRLFH. 2 C2H2-type zinc fingers span residues 169–192 and 221–244; these read YYCKKCTYRDRLYNVVRRHIYREH and IHCKSCHFTPRSYEALVQHVIEFH. Residues 401-423 form a C2H2-type 5; atypical zinc finger; the sequence is KICTICNELFPESAYSAHFEKEH. The C2H2-type 6; atypical zinc finger occupies 443 to 464; it reads SKCLYCNRYLPSDSLLNHMLVH. A C2H2-type 7 zinc finger spans residues 466 to 489; the sequence is LSCPHCHSTFHEVEKIVAHNRLAH. A C2H2-type 8; atypical zinc finger spans residues 583-608; sequence TLCPLCFTILKGPISDALAHHLRDSH. The C2H2-type 9; atypical zinc-finger motif lies at 623–647; sequence YKCIHCLGVYTSNMTASTITLHLVH. The disordered stretch occupies residues 659–689; the sequence is KPITTGLRSPGAGSLKRELVTPDPSDPKRRK. A DNA-binding region (homeobox) is located at residues 732–774; sequence AYFNRHPYPSQREVEKLAASLWLWKSDVASHFGNHRRLCDRDF. Residues 911–949 form a disordered region; it reads DVRANRSSPRVGPKVLDGSVSSSSPDEATWSGNMSSEES. Polar residues predominate over residues 929-946; that stretch reads SVSSSSPDEATWSGNMSS.

As to quaternary structure, interacts with catenin beta-1/ctnnb1.

The protein localises to the nucleus. In terms of biological role, may be involved in transcriptional regulation. Positively modulates wnt-beta-catenin/ctnnb1 signaling. Required for embryonic neurogenesis. Required for progression through late erythroid differentiation. The chain is Activity-dependent neuroprotective protein a from Danio rerio (Zebrafish).